Consider the following 570-residue polypeptide: Urease subunit alpha (570 aa).

The region spanning 133-570 (GGIDNHIHYI…LPLAQLYNLF (438 aa)) is the Urease domain. Residues histidine 138, histidine 140, and lysine 221 each contribute to the Ni(2+) site. Residue lysine 221 is modified to N6-carboxylysine. Histidine 223 lines the substrate pocket. Histidine 250 and histidine 276 together coordinate Ni(2+). Residue histidine 324 is the Proton donor of the active site. Aspartate 364 contacts Ni(2+).

It belongs to the metallo-dependent hydrolases superfamily. Urease alpha subunit family. Heterotrimer of UreA (gamma), UreB (beta) and UreC (alpha) subunits. Three heterotrimers associate to form the active enzyme. Ni cation is required as a cofactor. Post-translationally, carboxylation allows a single lysine to coordinate two nickel ions.

The protein localises to the cytoplasm. It catalyses the reaction urea + 2 H2O + H(+) = hydrogencarbonate + 2 NH4(+). It participates in nitrogen metabolism; urea degradation; CO(2) and NH(3) from urea (urease route): step 1/1. This Cytophaga hutchinsonii (strain ATCC 33406 / DSM 1761 / CIP 103989 / NBRC 15051 / NCIMB 9469 / D465) protein is Urease subunit alpha.